The chain runs to 73 residues: Small ribosomal subunit protein bS18B (73 aa).

It belongs to the bacterial ribosomal protein bS18 family. As to quaternary structure, part of the 30S ribosomal subunit. Forms a tight heterodimer with protein bS6.

Functionally, binds as a heterodimer with protein bS6 to the central domain of the 16S rRNA, where it helps stabilize the platform of the 30S subunit. In Frankia alni (strain DSM 45986 / CECT 9034 / ACN14a), this protein is Small ribosomal subunit protein bS18B.